Consider the following 68-residue polypeptide: Amphipathic peptide CT1 (68 aa).

Positions 1–23 (MKTQIVILIVAVLFLQLVSQSDA) are cleaved as a signal peptide. Residue leucine 36 is modified to Leucine amide. Residues 40-68 (GLKNLDQYNDLFDGEISDADIKFLKDLMR) constitute a propeptide that is removed on maturation.

Belongs to the non-disulfide-bridged peptide (NDBP) superfamily. Short antimicrobial peptide (group 4) family. In terms of tissue distribution, expressed by the venom gland.

It is found in the secreted. Its subcellular location is the target cell membrane. Amphipathic peptide that shows no antibacterial activity even at 50 uM but shows a low hemolytic activity against human erythrocytes. This Mesomexovis subcristatus (Scorpion) protein is Amphipathic peptide CT1.